Reading from the N-terminus, the 573-residue chain is DEAD-box ATP-dependent RNA helicase 47B (573 aa).

The Q motif signature appears at 131–159 (KSFEELGLPPLLIDRLNKEGLSTPTEVQS). Positions 162 to 362 (IPIISQKHDA…RSWGHDPVLV (201 aa)) constitute a Helicase ATP-binding domain. 175 to 182 (SYTGSGKT) is an ATP binding site. The DEAD box signature appears at 293 to 296 (DEVD). Residues 421–565 (TLRRCIHALE…PCEFTEGKLL (145 aa)) enclose the Helicase C-terminal domain.

The protein belongs to the DEAD box helicase family.

It carries out the reaction ATP + H2O = ADP + phosphate + H(+). The protein is DEAD-box ATP-dependent RNA helicase 47B of Oryza sativa subsp. japonica (Rice).